We begin with the raw amino-acid sequence, 290 residues long: Appressoria-specific virulence factor GAS2 (290 aa).

The N-terminal stretch at 1–19 is a signal peptide; that stretch reads MKYTSAILISAFAATNVFA. Residue N99 is glycosylated (N-linked (GlcNAc...) asparagine). The disordered stretch occupies residues 121–140; sequence LPRAGGGTSTPKGTEETGVK.

Its subcellular location is the cytoplasm. In terms of biological role, appressoria-specific virulence factor required for appressorial penetration in host and lesion development. The polypeptide is Appressoria-specific virulence factor GAS2 (Pyricularia oryzae (strain 70-15 / ATCC MYA-4617 / FGSC 8958) (Rice blast fungus)).